A 680-amino-acid polypeptide reads, in one-letter code: Outer dense fiber protein 2 (680 aa).

The segment at 27 to 46 (LPKPSATSSQKSHKRGMKGD) is disordered. 2 positions are modified to phosphoserine: Ser68 and Ser69. Phosphothreonine is present on Thr87. Residue Ser90 is modified to Phosphoserine; by TSSK4. Phosphoserine occurs at positions 101 and 104. Thr105 carries the phosphothreonine modification. Phosphoserine is present on residues Ser110 and Ser124. Residue Lys133 forms a Glycyl lysine isopeptide (Lys-Gly) (interchain with G-Cter in SUMO2) linkage. Residue Ser134 is modified to Phosphoserine. Residues 139 to 212 (QKGERQMAKR…MSKLVEAEMD (74 aa)) adopt a coiled-coil conformation. Position 226 is a phosphothreonine (Thr226). A Phosphoserine modification is found at Ser256. Coiled coils occupy residues 275 to 418 (KEDS…AEQL) and 456 to 630 (EIIV…SDLR). The disordered stretch occupies residues 387-410 (KQKGDRDKESLKKAIRAQKERAEK). Residue Ser627 is modified to Phosphoserine. Positions 632–680 (RETGGDQCPEYRVPTGDCQEGGGNPPVPAAARGENTGMWDPGKAVGERH) are disordered.

Belongs to the ODF2 family. As to quaternary structure, self-associates. Associates with microtubules and forms a fibrillar structure partially linked to the microtubule network. Interacts via its C-terminus with PLK1. Interacts with ODF1. Interacts with MARK4; the interaction is required for localization of ODF2 to centrioles. Interacts with TSSK4. Interacts with AKNA. Interacts with QRICH2. Interacts with CFAP58. Interacts with BBOF1. Interacts with CCDC38. Interacts with CCDC42. In terms of processing, tyrosine phosphorylated. Phosphorylated on Ser-90 by TSSK4.

It localises to the cytoplasm. Its subcellular location is the cytoskeleton. The protein localises to the microtubule organizing center. The protein resides in the centrosome. It is found in the cell projection. It localises to the cilium. Its subcellular location is the centriole. The protein localises to the spindle pole. The protein resides in the flagellum. Functionally, seems to be a major component of sperm tail outer dense fibers (ODF). ODFs are filamentous structures located on the outside of the axoneme in the midpiece and principal piece of the mammalian sperm tail and may help to maintain the passive elastic structures and elastic recoil of the sperm tail. May have a modulating influence on sperm motility. Functions as a general scaffold protein that is specifically localized at the distal/subdistal appendages of mother centrioles. Component of the centrosome matrix required for the localization of PLK1 and NIN to the centrosomes. Required for the formation and/or maintenance of normal CETN1 assembly. This chain is Outer dense fiber protein 2 (ODF2), found in Pongo abelii (Sumatran orangutan).